A 199-amino-acid polypeptide reads, in one-letter code: UPF0301 protein Daci_1578 (199 aa).

It belongs to the UPF0301 (AlgH) family.

The polypeptide is UPF0301 protein Daci_1578 (Delftia acidovorans (strain DSM 14801 / SPH-1)).